The following is a 78-amino-acid chain: Pro-glucagon (78 aa).

This sequence belongs to the glucagon family.

The protein localises to the secreted. In terms of biological role, plays a key role in glucose metabolism and homeostasis. Regulates blood glucose by increasing gluconeogenesis and decreasing glycolysis. This chain is Pro-glucagon (gcg), found in Atractosteus spatula (Alligator gar).